Consider the following 238-residue polypeptide: Phosphoribosylaminoimidazole-succinocarboxamide synthase (238 aa).

This sequence belongs to the SAICAR synthetase family.

It carries out the reaction 5-amino-1-(5-phospho-D-ribosyl)imidazole-4-carboxylate + L-aspartate + ATP = (2S)-2-[5-amino-1-(5-phospho-beta-D-ribosyl)imidazole-4-carboxamido]succinate + ADP + phosphate + 2 H(+). It functions in the pathway purine metabolism; IMP biosynthesis via de novo pathway; 5-amino-1-(5-phospho-D-ribosyl)imidazole-4-carboxamide from 5-amino-1-(5-phospho-D-ribosyl)imidazole-4-carboxylate: step 1/2. The protein is Phosphoribosylaminoimidazole-succinocarboxamide synthase of Alcanivorax borkumensis (strain ATCC 700651 / DSM 11573 / NCIMB 13689 / SK2).